The primary structure comprises 346 residues: NADH-ubiquinone oxidoreductase chain 2 (346 aa).

A run of 10 helical transmembrane segments spans residues 25–45, 52–72, 95–115, 124–144, 149–169, 178–196, 200–219, 247–267, 274–294, and 326–346; these read HWILAWTGLEINTLAIIPLIS, AIEAAIKYFLTQSTASALILF, CLILTMAIAIKLGLVPFHFWF, LITALLLSTLMKLPPMTLLLM, LNPALLTLLAVSSALVGGWMG, ILAFSSISHLGWMIVIIIY, LTILTFIIYSLMTSTVFLSL, TLLSLAGLPPLTGFMPKWLII, EMTPVATTIAMLSLLGLFFYL, and AILTVLSISLLPLSPLITTLV.

This sequence belongs to the complex I subunit 2 family.

It is found in the mitochondrion inner membrane. The catalysed reaction is a ubiquinone + NADH + 5 H(+)(in) = a ubiquinol + NAD(+) + 4 H(+)(out). Core subunit of the mitochondrial membrane respiratory chain NADH dehydrogenase (Complex I) that is believed to belong to the minimal assembly required for catalysis. Complex I functions in the transfer of electrons from NADH to the respiratory chain. The immediate electron acceptor for the enzyme is believed to be ubiquinone. This Coturnix japonica (Japanese quail) protein is NADH-ubiquinone oxidoreductase chain 2 (MT-ND2).